The sequence spans 611 residues: U-box domain-containing protein 12 (611 aa).

Residues 227–301 form the U-box domain; sequence IIPDEFRCPI…SQWCEANGIE (75 aa). ARM repeat units follow at residues 355–394, 396–435, 437–476, and 478–517; these read VNNR…NLSI, ENNK…SLSV, DENK…NLCI, and QGNK…ILAG.

It catalyses the reaction S-ubiquitinyl-[E2 ubiquitin-conjugating enzyme]-L-cysteine + [acceptor protein]-L-lysine = [E2 ubiquitin-conjugating enzyme]-L-cysteine + N(6)-ubiquitinyl-[acceptor protein]-L-lysine.. The protein operates within protein modification; protein ubiquitination. In terms of biological role, possesses E3 ubiquitin-protein ligase in vitro. The chain is U-box domain-containing protein 12 (PUB12) from Oryza sativa subsp. japonica (Rice).